The chain runs to 197 residues: dCTP deaminase (197 aa).

105–110 serves as a coordination point for dCTP; the sequence is RSSIAR. Glu-133 acts as the Proton donor/acceptor in catalysis. The dCTP site is built by Tyr-166 and Gln-177. Residues 172–197 are disordered; that stretch reads NKYAGQKDPKPSRLAEELSLEQLRGR. The segment covering 176–187 has biased composition (basic and acidic residues); it reads GQKDPKPSRLAE.

The protein belongs to the dCTP deaminase family. Homotrimer.

The enzyme catalyses dCTP + H2O + H(+) = dUTP + NH4(+). Its pathway is pyrimidine metabolism; dUMP biosynthesis; dUMP from dCTP (dUTP route): step 1/2. In terms of biological role, catalyzes the deamination of dCTP to dUTP. This is dCTP deaminase from Thermomicrobium roseum (strain ATCC 27502 / DSM 5159 / P-2).